The following is a 337-amino-acid chain: Inositol 2-dehydrogenase (337 aa).

The protein belongs to the Gfo/Idh/MocA family. Homotetramer.

The catalysed reaction is myo-inositol + NAD(+) = scyllo-inosose + NADH + H(+). Its function is as follows. Involved in the oxidation of myo-inositol (MI) to 2-keto-myo-inositol (2KMI or 2-inosose). The polypeptide is Inositol 2-dehydrogenase (Corynebacterium glutamicum (strain R)).